Here is a 347-residue protein sequence, read N- to C-terminus: uncharacterized protein (347 aa).

The protein resides in the cytoplasm. It is found in the nucleus. This is an uncharacterized protein from Schizosaccharomyces pombe (strain 972 / ATCC 24843) (Fission yeast).